A 1392-amino-acid chain; its full sequence is L-2-aminoadipate reductase (1392 aa).

Lys-541 is covalently cross-linked (Glycyl lysine isopeptide (Lys-Gly) (interchain with G-Cter in ubiquitin)). In terms of domain architecture, Carrier spans 843–920 (SQFTNVEREV…AFAAEIDRIK (78 aa)). Residue Ser-880 is modified to O-(pantetheine 4'-phosphoryl)serine. Lys-1276 is covalently cross-linked (Glycyl lysine isopeptide (Lys-Gly) (interchain with G-Cter in ubiquitin)).

The protein belongs to the ATP-dependent AMP-binding enzyme family. The cofactor is pantetheine 4'-phosphate.

The enzyme catalyses (S)-2-amino-6-oxohexanoate + NADP(+) + H2O = L-2-aminoadipate + NADPH + 2 H(+). The catalysed reaction is (S)-2-amino-6-oxohexanoate + NAD(+) + H2O = L-2-aminoadipate + NADH + 2 H(+). It carries out the reaction (S)-2-amino-6-oxohexanoate + AMP + diphosphate + NADP(+) = L-2-aminoadipate + ATP + NADPH + H(+). It functions in the pathway amino-acid biosynthesis; L-lysine biosynthesis via AAA pathway; L-lysine from L-alpha-aminoadipate (fungal route): step 1/3. Catalyzes the activation of alpha-aminoadipate by ATP-dependent adenylation and the reduction of activated alpha-aminoadipate by NADPH. The activated alpha-aminoadipate is bound to the phosphopantheinyl group of the enzyme itself before it is reduced to (S)-2-amino-6-oxohexanoate. This chain is L-2-aminoadipate reductase (LYS2), found in Saccharomyces cerevisiae (strain ATCC 204508 / S288c) (Baker's yeast).